Reading from the N-terminus, the 349-residue chain is MEEEKYLPELMAEKDSLDPSFVHASRLLAEEIEKFQGSDGKKEDEEKKYLDVISNKNIKLSERVLIPVKQYPKFNFVGKLLGPRGNSLKRLQEETGAKMSILGKGSMRDKAKEEELRKSGEAKYAHLSDELHVLIEVFAPPGEAYSRMSHALEEIKKFLVPDYNDEIRQEQLRELSYLNGSEDSGRGRGIRGRGIRIAPTAPSRGRGGAIPPPPPPGRGVLTPRGSTVTRGALPVPPVARGVPTPRARGAPTVPGYRAPPPPAHEAYEEYGYDDGYGGEYDDQTYETYDNSYATQTQSVPEYYDYGHGVSEDAYDSYAPEEWATTRSSLKAPPQRSARGGYREHPYGRY.

One can recognise a KH domain in the interval 65–135 (LIPVKQYPKF…HLSDELHVLI (71 aa)). 2 disordered regions span residues 182-284 (EDSG…DDQT) and 319-349 (PEEW…YGRY). An omega-N-methylarginine mark is found at Arg-230 and Arg-240. The segment covering 340 to 349 (GYREHPYGRY) has biased composition (basic and acidic residues).

It belongs to the KHDRBS family. As to quaternary structure, self-associates to form homooligomers. Interacts with KHDRBS1/SAM68; heterooligomer formation of KHDRBS family proteins may modulate RNA substrate specificity. Interacts with RBMX. Interacts with SAFB, SFRS9 and YTHDC1. Interacts with FYN and PLCG1 (via SH3 domain). Interacts (phosphorylated) with FYN, GRB2, PLCG1 and RASA1 (via SH2 domain). In terms of processing, methylated. Tyrosine phosphorylated by FYN, PTK6 and SRC. Tyrosine phosphorylated by SRC during mitosis. In terms of tissue distribution, highly expressed in brain, lung, kidney and small intestine. Weakly expressed in placenta, liver, spleen, thymus, ovary and colon.

It is found in the nucleus. RNA-binding protein that plays a role in the regulation of alternative splicing and influences mRNA splice site selection and exon inclusion. Binds both poly(A) and poly(U) homopolymers. Phosphorylation by PTK6 inhibits its RNA-binding ability. Induces an increased concentration-dependent incorporation of exon in CD44 pre-mRNA by direct binding to purine-rich exonic enhancer. Can regulate alternative splicing of NRXN1 in the laminin G-like domain 6 containing the evolutionary conserved neurexin alternative spliced segment 4 (AS4) involved in neurexin selective targeting to postsynaptic partners. Regulates cell-type specific alternative splicing of NRXN1 at AS4 and acts synergystically with SAM68 in exon skipping. In contrast acts antagonistically with SAM68 in NRXN3 exon skipping at AS4. Its phosphorylation by FYN inhibits its ability to regulate splice site selection. May function as an adapter protein for Src kinases during mitosis. The chain is KH domain-containing, RNA-binding, signal transduction-associated protein 2 (KHDRBS2) from Homo sapiens (Human).